The sequence spans 473 residues: H(+)/Cl(-) exchange transporter ClcA (473 aa).

Over 1–32 (MKTDTPSLETPQAARLRRRQLIRQLLERDKTP) the chain is Cytoplasmic. A helical membrane pass occupies residues 33-69 (LAILFMAAVVGTLVGLAAVAFDKGVAWLQNQRMGALV). The Periplasmic portion of the chain corresponds to 70-76 (HTADNYP). Residues 77–100 (LLLTVAFLCSAVLAMFGYFLVRKY) traverse the membrane as a helical segment. The Selectivity filter part_1 signature appears at 106–110 (GSGIP). Ser-107 lines the chloride pocket. The helical intramembrane region spans 109–116 (IPEIEGAL). Residues 117–123 (EDQRPVR) lie on the Cytoplasmic side of the membrane. Helical transmembrane passes span 124–141 (WWRVLPVKFFGGLGTLGG) and 148–166 (EGPTVQIGGNIGRMVLDIF). The Selectivity filter part_2 signature appears at 146–150 (GREGP). Over 167–176 (RLKGDEARHT) the chain is Cytoplasmic. 2 consecutive intramembrane regions (helical) follow at residues 177 to 189 (LLATGAAAGLAAA) and 193 to 201 (PLAGILFII). Residues 202 to 214 (EEMRPQFRYTLIS) lie on the Cytoplasmic side of the membrane. Residues 215–232 (IKAVFIGVIMSTIMYRIF) form a helical membrane-spanning segment. The Periplasmic portion of the chain corresponds to 233–252 (NHEVALIDVGKLSDAPLNTQ). A helical transmembrane segment spans residues 253-281 (WLYLILGIIFGIFGPIFNKWVLGMQDLLH). The Cytoplasmic portion of the chain corresponds to 282–287 (RVHGGN). A helical membrane pass occupies residues 288–309 (ITKWVLMGGAIGGLCGLLGFVA). The Periplasmic portion of the chain corresponds to 310 to 329 (PATSGGGFNLIPIATAGNFS). Transmembrane regions (helical) follow at residues 330-349 (MGMLVFIFVARVITTLLCFS) and 355-376 (GIFAPMLALGTVLGTAFGMVVV). Residues 355-359 (GIFAP) carry the Selectivity filter part_3 motif. Residues Ile-356 and Phe-357 each contribute to the chloride site. Residues 377–386 (ELFPQYHLEA) are Periplasmic-facing. The helical intramembrane region spans 387–401 (GTFAIAGMGALLAAS). Positions 402–404 (IRA) form an intramembrane region, note=Loop between two helices. An intramembrane region (helical) is located at residues 405 to 416 (PLTGIILVLEMT). An intramembrane region (note=Loop between two helices) is located at residues 417-421 (DNYQL). A helical membrane pass occupies residues 422–438 (ILPMIITGLGATLLAQF). Residues 439 to 473 (TGGKPLYSAILARTLAKQEAEQLARSKAASASENT) lie on the Cytoplasmic side of the membrane. Residue Tyr-445 participates in chloride binding.

It belongs to the chloride channel (TC 2.A.49) family. ClcA subfamily. As to quaternary structure, homodimer.

It localises to the cell inner membrane. The enzyme catalyses 2 chloride(in) + H(+)(out) = 2 chloride(out) + H(+)(in). In terms of biological role, proton-coupled chloride transporter. Functions as antiport system and exchanges two chloride ions for 1 proton. Probably acts as an electrical shunt for an outwardly-directed proton pump that is linked to amino acid decarboxylation, as part of the extreme acid resistance (XAR) response. The protein is H(+)/Cl(-) exchange transporter ClcA of Shigella boydii serotype 18 (strain CDC 3083-94 / BS512).